We begin with the raw amino-acid sequence, 216 residues long: uncharacterized protein (216 aa).

Polar residues predominate over residues 182–193; the sequence is STSNASVNSDDA. The tract at residues 182 to 204 is disordered; sequence STSNASVNSDDASTAELGPTSEE.

This is an uncharacterized protein from Caenorhabditis elegans.